The following is a 237-amino-acid chain: MEKRDELYRGKAKTVYYTDDSDKLILHFRNDTSAFDGEKIEQLDRKGEVNNKFNHFIMTKLEEAGVATQVEALISDTESLVKKLDMIPVECVVRNLSAGSLVRRLGVEEGQALNPPIFEFFLKNDALHDPMVNDYHILSFGWATQEQIAEMKALTFKVNNVLKALFDDAGMLLVDYKLEFGVDKDGNIVLGDEFTPDGCRLWDKETRKKMDKDRFRQGLGSVVETYIEVAERLGLSL.

It belongs to the SAICAR synthetase family.

The catalysed reaction is 5-amino-1-(5-phospho-D-ribosyl)imidazole-4-carboxylate + L-aspartate + ATP = (2S)-2-[5-amino-1-(5-phospho-beta-D-ribosyl)imidazole-4-carboxamido]succinate + ADP + phosphate + 2 H(+). Its pathway is purine metabolism; IMP biosynthesis via de novo pathway; 5-amino-1-(5-phospho-D-ribosyl)imidazole-4-carboxamide from 5-amino-1-(5-phospho-D-ribosyl)imidazole-4-carboxylate: step 1/2. This chain is Phosphoribosylaminoimidazole-succinocarboxamide synthase, found in Alteromonas mediterranea (strain DSM 17117 / CIP 110805 / LMG 28347 / Deep ecotype).